The following is a 225-amino-acid chain: Riboflavin kinase (225 aa).

The tract at residues 1-89 is unknown; the sequence is MPDIKYLKKL…SRIFSPDLDI (89 aa). A riboflavin kinase region spans residues 90–225; sequence LELEGKVLKG…LKKQGTENQK (136 aa). Residue 99-104 coordinates CDP; it reads GLGEGQ. Mg(2+) contacts are provided by Thr-128 and Asn-130. FMN is bound by residues Thr-185 and Glu-193. 198–201 provides a ligand contact to CDP; that stretch reads IKLR.

The protein belongs to the archaeal riboflavin kinase family. Requires Mg(2+) as cofactor.

The catalysed reaction is riboflavin + CTP = CDP + FMN + H(+). The protein operates within cofactor biosynthesis; FMN biosynthesis; FMN from riboflavin (CTP route): step 1/1. Catalyzes the CTP-dependent phosphorylation of riboflavin (vitamin B2) to form flavin mononucleotide (FMN). The sequence is that of Riboflavin kinase (ribK) from Methanosarcina barkeri (strain Fusaro / DSM 804).